The chain runs to 757 residues: Endonuclease MutS2 (757 aa).

Gly321 to Thr328 contacts ATP. Positions Ile681–Lys756 constitute a Smr domain.

It belongs to the DNA mismatch repair MutS family. MutS2 subfamily. Homodimer. Binds to stalled ribosomes, contacting rRNA. Interacts with MutL.

With respect to regulation, nuclease activity is stimulated by interaction with MutL and inhibited in the presence of non-hydrolytic ATP (ADPnP). ATPase activity is stimulated by DNA. Endonuclease that is involved in the suppression of homologous recombination and thus may have a key role in the control of bacterial genetic diversity. Has ATPase activity. Binds to DNA. Its function is as follows. Acts as a ribosome collision sensor, splitting the ribosome into its 2 subunits. Detects stalled/collided 70S ribosomes which it binds and splits by an ATP-hydrolysis driven conformational change. Acts upstream of the ribosome quality control system (RQC), a ribosome-associated complex that mediates the extraction of incompletely synthesized nascent chains from stalled ribosomes and their subsequent degradation. Probably generates substrates for RQC. This is Endonuclease MutS2 from Thermotoga maritima (strain ATCC 43589 / DSM 3109 / JCM 10099 / NBRC 100826 / MSB8).